The sequence spans 287 residues: Genetic interactor of prohibitin 7, mitochondrial (287 aa).

A mitochondrion-targeting transit peptide spans 1–24 (MVLSNVKIFRLKSHRAFRIGPMIK). The helical transmembrane segment at 250–266 (SKAIISFVVFVSIYVWL) threads the bilayer.

Belongs to the GEP7 family.

The protein localises to the mitochondrion membrane. In terms of biological role, involved in respiratory growth and required for cell survival in the absence of prohibitins or GEM1. This is Genetic interactor of prohibitin 7, mitochondrial (GEP7) from Saccharomyces cerevisiae (strain ATCC 204508 / S288c) (Baker's yeast).